The chain runs to 136 residues: Large ribosomal subunit protein uL16c (136 aa).

Belongs to the universal ribosomal protein uL16 family. Part of the 50S ribosomal subunit.

It is found in the plastid. It localises to the chloroplast. The protein is Large ribosomal subunit protein uL16c of Mesostigma viride (Green alga).